The sequence spans 101 residues: MKLDSRDLVDIIKNPVVTEKATRLMELNQYTFDVDPRATKPMIKQVIEQIFEVKVIGINTLNLPRKKRRVGKYIGFKPRYKRAIVTLEDGEPIRKVLFPDL.

The protein belongs to the universal ribosomal protein uL23 family. As to quaternary structure, part of the 50S ribosomal subunit. Contacts protein L29, and trigger factor when it is bound to the ribosome.

Its function is as follows. One of the early assembly proteins it binds 23S rRNA. One of the proteins that surrounds the polypeptide exit tunnel on the outside of the ribosome. Forms the main docking site for trigger factor binding to the ribosome. The sequence is that of Large ribosomal subunit protein uL23 from Trichodesmium erythraeum (strain IMS101).